Consider the following 447-residue polypeptide: Maltoporin (447 aa).

The first 26 residues, 1–26, serve as a signal peptide directing secretion; the sequence is MELRMKKVSVIAAAVAATLAAGSAFA.

This sequence belongs to the porin LamB (TC 1.B.3) family. Homotrimer formed of three 18-stranded antiparallel beta-barrels, containing three independent channels.

The protein resides in the cell outer membrane. The enzyme catalyses beta-maltose(in) = beta-maltose(out). Functionally, involved in the transport of maltose and maltodextrins. This is Maltoporin from Vibrio campbellii (strain ATCC BAA-1116).